The primary structure comprises 106 residues: ATP-dependent Clp protease adapter protein ClpS (106 aa).

It belongs to the ClpS family. In terms of assembly, binds to the N-terminal domain of the chaperone ClpA.

Functionally, involved in the modulation of the specificity of the ClpAP-mediated ATP-dependent protein degradation. The chain is ATP-dependent Clp protease adapter protein ClpS from Salmonella gallinarum (strain 287/91 / NCTC 13346).